Consider the following 345-residue polypeptide: N-acetyl-gamma-glutamyl-phosphate reductase (345 aa).

Cys149 is a catalytic residue.

This sequence belongs to the NAGSA dehydrogenase family. Type 1 subfamily.

Its subcellular location is the cytoplasm. It carries out the reaction N-acetyl-L-glutamate 5-semialdehyde + phosphate + NADP(+) = N-acetyl-L-glutamyl 5-phosphate + NADPH + H(+). It participates in amino-acid biosynthesis; L-arginine biosynthesis; N(2)-acetyl-L-ornithine from L-glutamate: step 3/4. Catalyzes the NADPH-dependent reduction of N-acetyl-5-glutamyl phosphate to yield N-acetyl-L-glutamate 5-semialdehyde. This chain is N-acetyl-gamma-glutamyl-phosphate reductase, found in Geobacillus stearothermophilus (Bacillus stearothermophilus).